The primary structure comprises 1012 residues: Formate dehydrogenase 2 subunit alpha (cytochrome c-553) (1012 aa).

The tat-type signal signal peptide spans 1-33 (MKTTRRSFLKLVGVSVVGLSLGQLGFDLEDAQA). The 57-residue stretch at 43–99 (AKEVGTVCPFCSVCCQVIAYVRNGKLVSTEGDPDFPVNEGALCAKGAALFSMYTNPH) folds into the 4Fe-4S Mo/W bis-MGD-type domain. [4Fe-4S] cluster contacts are provided by cysteine 50, cysteine 53, cysteine 57, and cysteine 85. Residue selenocysteine 189 participates in W-bis(molybdopterin guanine dinucleotide) binding. Position 189 (selenocysteine 189) is a non-standard amino acid, selenocysteine. Ca(2+)-binding residues include threonine 389, arginine 391, lysine 394, leucine 424, and asparagine 426.

It belongs to the prokaryotic molybdopterin-containing oxidoreductase family. As to quaternary structure, heterotrimer of cytochrome c3 FDH2C and formate dehydrogenase FDH2 alpha and beta subunits that forms the FdhABC(3) complex. [4Fe-4S] cluster is required as a cofactor. Requires W-bis(molybdopterin guanine dinucleotide) as cofactor. In terms of processing, predicted to be exported by the Tat system. The position of the signal peptide cleavage has not been experimentally proven.

The protein resides in the periplasm. It catalyses the reaction 2 Fe(III)-[cytochrome c553] + formate = 2 Fe(II)-[cytochrome c553] + CO2 + H(+). Its function is as follows. Alpha chain of the formate dehydrogenase (FDH) that catalyzes the reversible two-electron oxidation of formate to carbon dioxide. The alpha subunit of formate dehydrogenase forms the active site. The protein is Formate dehydrogenase 2 subunit alpha (cytochrome c-553) of Nitratidesulfovibrio vulgaris (strain ATCC 29579 / DSM 644 / CCUG 34227 / NCIMB 8303 / VKM B-1760 / Hildenborough) (Desulfovibrio vulgaris).